Here is a 314-residue protein sequence, read N- to C-terminus: Ribonuclease Z (314 aa).

Positions 62, 64, 66, 67, 139, 210, and 268 each coordinate Zn(2+). The active-site Proton acceptor is D66.

The protein belongs to the RNase Z family. As to quaternary structure, homodimer. Zn(2+) is required as a cofactor.

The catalysed reaction is Endonucleolytic cleavage of RNA, removing extra 3' nucleotides from tRNA precursor, generating 3' termini of tRNAs. A 3'-hydroxy group is left at the tRNA terminus and a 5'-phosphoryl group is left at the trailer molecule.. Zinc phosphodiesterase, which displays some tRNA 3'-processing endonuclease activity. Probably involved in tRNA maturation, by removing a 3'-trailer from precursor tRNA. This is Ribonuclease Z from Rippkaea orientalis (strain PCC 8801 / RF-1) (Cyanothece sp. (strain PCC 8801)).